The chain runs to 110 residues: Phosphoribosyl-AMP cyclohydrolase (110 aa).

Aspartate 74 provides a ligand contact to Mg(2+). Residue cysteine 75 participates in Zn(2+) binding. Positions 76 and 78 each coordinate Mg(2+). Residues cysteine 91 and cysteine 98 each coordinate Zn(2+).

The protein belongs to the PRA-CH family. In terms of assembly, homodimer. Mg(2+) serves as cofactor. The cofactor is Zn(2+).

It is found in the cytoplasm. The enzyme catalyses 1-(5-phospho-beta-D-ribosyl)-5'-AMP + H2O = 1-(5-phospho-beta-D-ribosyl)-5-[(5-phospho-beta-D-ribosylamino)methylideneamino]imidazole-4-carboxamide. The protein operates within amino-acid biosynthesis; L-histidine biosynthesis; L-histidine from 5-phospho-alpha-D-ribose 1-diphosphate: step 3/9. Its function is as follows. Catalyzes the hydrolysis of the adenine ring of phosphoribosyl-AMP. This chain is Phosphoribosyl-AMP cyclohydrolase, found in Lacticaseibacillus paracasei (strain ATCC 334 / BCRC 17002 / CCUG 31169 / CIP 107868 / KCTC 3260 / NRRL B-441) (Lactobacillus paracasei).